Here is a 376-residue protein sequence, read N- to C-terminus: UDP-4-amino-4,6-dideoxy-N-acetyl-beta-L-altrosamine transaminase (376 aa).

Substrate contacts are provided by residues Y4, 24–27 (EILT), A54, and S176. N6-(pyridoxal phosphate)lysine is present on K181. Substrate contacts are provided by residues N226 and 311-314 (QVHY).

It belongs to the DegT/DnrJ/EryC1 family.

The catalysed reaction is UDP-4-amino-4,6-dideoxy-N-acetyl-beta-L-altrosamine + 2-oxoglutarate = UDP-2-acetamido-2,6-dideoxy-beta-L-arabino-hex-4-ulose + L-glutamate. In terms of biological role, catalyzes the second step in the biosynthesis of pseudaminic acid, a sialic-acid-like sugar that is used to modify flagellin. Uses UDP-2-acetamido-2,6-dideoxy-beta-L-arabino-4-hexulose as substrate producing UDP-4-amino-4,6-dideoxy-beta-L-AltNAc. This Campylobacter jejuni subsp. jejuni serotype O:23/36 (strain 81-176) protein is UDP-4-amino-4,6-dideoxy-N-acetyl-beta-L-altrosamine transaminase (pseC).